The chain runs to 218 residues: Radial spoke head 1 homolog (218 aa).

Positions 1–13 (MSDAGTEEFDEEQ) are enriched in acidic residues. The interval 1–48 (MSDAGTEEFDEEQGSLGEYEGDRNEAGERHGQGKAVLPRGDTYQGAYE) is disordered. MORN repeat units lie at residues 19-42 (YEGD…RGDT), 43-65 (YQGA…NGAR), 66-88 (YTGE…DGSK), 89-111 (YEGS…NGDT), 112-134 (YDGE…ETGS), and 158-180 (YHGN…IGCE). A compositionally biased stretch (basic and acidic residues) spans 20–31 (EGDRNEAGERHG).

As to quaternary structure, component of the axonemal radial spoke complexes. Interacts with septin SEPT7. In terms of tissue distribution, testis-specific.

It localises to the cytoplasm. The protein resides in the cytoskeleton. It is found in the cilium axoneme. The protein localises to the flagellum basal body. Its subcellular location is the flagellum axoneme. Its function is as follows. Functions as part of axonemal radial spoke complexes that play an important part in the motility of sperm and cilia. The chain is Radial spoke head 1 homolog (rsph1) from Cyprinus carpio (Common carp).